A 542-amino-acid chain; its full sequence is Pre-mRNA-splicing factor 38B (542 aa).

Residues 1–12 (MANNSPALTGNS) show a composition bias toward polar residues. Residues 1–24 (MANNSPALTGNSQPQHQAAAAVVQ) are disordered. Ala-2 carries the post-translational modification N-acetylalanine. Ser-5 bears the Phosphoserine mark. Positions 13-24 (QPQHQAAAAVVQ) are enriched in low complexity. The residue at position 227 (Lys-227) is an N6-acetyllysine. Residues 232-542 (QIKTRPRKIK…KEHKNKDETV (311 aa)) form a disordered region. Over residues 243-255 (DGKEGVEEIDRHI) the composition is skewed to basic and acidic residues. Residues 256–284 (ERRRSRSPRRSLSPRRSPRRSRSRSHHRD) are compositionally biased toward basic residues. Ser-288, Ser-290, Ser-318, and Ser-320 each carry phosphoserine. The segment covering 291–327 (FDRELEREKERQRLEREAKEREKERRRSRSLDRGLDR) has biased composition (basic and acidic residues). Residues 292–323 (DRELEREKERQRLEREAKEREKERRRSRSLDR) are a coiled coil. Over residues 328–344 (RRSRSRERHRSRSRSRD) the composition is skewed to basic residues. Residues 345–418 (RKGDRRDRDR…DRRHRDDKKE (74 aa)) show a composition bias toward basic and acidic residues. Residues 419–448 (SKKKHSRSRSRERKHRSRSRSRNAGKRSRS) are compositionally biased toward basic residues. Ser-446 is subject to Phosphoserine. Residues 449 to 466 (RSKDKASKHKNESKEKSN) show a composition bias toward basic and acidic residues. Phosphoserine occurs at positions 471, 473, and 479. Composition is skewed to basic and acidic residues over residues 479-492 (SVEKRKREHSPSRE) and 499-522 (RSQDRSHKRDHDSKDQSDRQDHQR). 3 positions are modified to phosphoserine: Ser-523, Ser-525, and Ser-530. The span at 530-542 (SQEKEHKNKDETV) shows a compositional bias: basic and acidic residues.

This sequence belongs to the PRP38 family.

The protein localises to the nucleus. Its function is as follows. May be required for pre-mRNA splicing. The sequence is that of Pre-mRNA-splicing factor 38B (Prpf38b) from Rattus norvegicus (Rat).